A 178-amino-acid chain; its full sequence is Large ribosomal subunit protein uL6 (178 aa).

Belongs to the universal ribosomal protein uL6 family. In terms of assembly, part of the 50S ribosomal subunit.

This protein binds to the 23S rRNA, and is important in its secondary structure. It is located near the subunit interface in the base of the L7/L12 stalk, and near the tRNA binding site of the peptidyltransferase center. This is Large ribosomal subunit protein uL6 from Halalkalibacterium halodurans (strain ATCC BAA-125 / DSM 18197 / FERM 7344 / JCM 9153 / C-125) (Bacillus halodurans).